The chain runs to 503 residues: ATP-dependent RNA helicase dbp3 (503 aa).

Basic and acidic residues predominate over residues 1-13 (MGKRVSHNEGADR). The interval 1–37 (MGKRVSHNEGADRRPKKKAKNEKPEKETMESPAADVT) is disordered. The Q motif motif lies at 104-112 (SFASPTPIQ). The region spanning 116-292 (WPLLFAGRDV…ATFMTSAVTV (177 aa)) is the Helicase ATP-binding domain. 129 to 136 (AETGSGKT) is an ATP binding site. The short motif at 239 to 242 (DEAD) is the DEAD box element. The Helicase C-terminal domain occupies 323–472 (RLVQLLSENQ…EVPQELLKFG (150 aa)).

This sequence belongs to the DEAD box helicase family. DDX5/DBP2 subfamily.

It is found in the nucleus. Its subcellular location is the nucleolus. It catalyses the reaction ATP + H2O = ADP + phosphate + H(+). Its function is as follows. ATP-dependent RNA helicase required for 60S ribosomal subunit synthesis. Involved in efficient pre-rRNA processing, predominantly at site A3, which is necessary for the normal formation of 25S and 5.8S rRNAs. The polypeptide is ATP-dependent RNA helicase dbp3 (dbp3) (Aspergillus clavatus (strain ATCC 1007 / CBS 513.65 / DSM 816 / NCTC 3887 / NRRL 1 / QM 1276 / 107)).